An 86-amino-acid polypeptide reads, in one-letter code: V-type proton ATPase subunit e (86 aa).

The helical transmembrane segment at 1–21 threads the bilayer; sequence MGILIPLVSVSAFWAIIGFGG. At 22 to 32 the chain is on the cytoplasmic side; that stretch reads PWIVPKGPNRG. Residues 33-53 traverse the membrane as a helical segment; sequence IIQLMIIMTAVCCWMFWIMVF. The Lumenal segment spans residues 54–86; it reads LHQLNPLIGPQINVKTIRWISEKWGDAPNVINN.

This sequence belongs to the V-ATPase e1/e2 subunit family. As to quaternary structure, V-ATPase is a heteromultimeric enzyme made up of two complexes: the ATP-hydrolytic V1 complex and the proton translocation V0 complex. The V1 complex consists of three catalytic AB heterodimers that form a heterohexamer, three peripheral stalks each consisting of EG heterodimers, one central rotor including subunits D and F, and the regulatory subunits C and H. The proton translocation complex V0 consists of the proton transport subunit a, a ring of proteolipid subunits c9c'', rotary subunit d, subunits e and f, and the accessory subunits vah-19/Ac45 and vah-20/PRR.

The protein resides in the apical cell membrane. Functionally, subunit of the V0 complex of vacuolar(H+)-ATPase (V-ATPase), a multisubunit enzyme composed of a peripheral complex (V1) that hydrolyzes ATP and a membrane integral complex (V0) that translocates protons. V-ATPase is responsible for acidifying and maintaining the pH of intracellular compartments and in some cell types, is targeted to the plasma membrane, where it is responsible for acidifying the extracellular environment. During embryonic development, the V-ATPase is required to repress fusion of epidermal cells probably by negatively regulating eff-1-mediated cell fusion. This is V-type proton ATPase subunit e from Caenorhabditis elegans.